The primary structure comprises 873 residues: Zinc fingers and homeoboxes protein 1 (873 aa).

The disordered stretch occupies residues 1-63; the sequence is MASRRKSTTP…ESVDSDNQQN (63 aa). A compositionally biased stretch (acidic residues) spans 18 to 30; that stretch reads QDPDLELISDLEE. Phosphothreonine is present on threonine 36. Phosphoserine is present on residues serine 45, serine 47, and serine 48. 2 consecutive C2H2-type zinc fingers follow at residues 70-93 and 102-125; these read YECK…DSEH and YVCV…LKYH. Lysine 159 is covalently cross-linked (Glycyl lysine isopeptide (Lys-Gly) (interchain with G-Cter in SUMO2)). A disordered region spans residues 198-247; it reads VHHNSAEGTSEEKENGVKASREENAENTSSSASESNTSTSTVNQVHPSPA. A Phosphoserine modification is found at serine 202. Basic and acidic residues predominate over residues 207 to 221; sequence SEEKENGVKASREEN. The span at 223-238 shows a compositional bias: low complexity; the sequence is ENTSSSASESNTSTST. Positions 272–432 are required for dimerization; the sequence is NSNLVPKVLI…QTNVQKSQVP (161 aa). A required for interaction with NFYA region spans residues 272–564; the sequence is NSNLVPKVLI…SQPKQSWNPF (293 aa). Residues 284–346 constitute a DNA-binding region (homeobox 1); that stretch reads NSIPTYNAAL…LKHGVSWTPE (63 aa). The disordered stretch occupies residues 430–455; that stretch reads QVPAAQPAAETKPATAAVPSSPSVRP. Residues lysine 441 and lysine 485 each participate in a glycyl lysine isopeptide (Lys-Gly) (interchain with G-Cter in SUMO2) cross-link. Residues 464–526 constitute a DNA-binding region (homeobox 2); it reads SFGIRAKKTK…YNQRNSKSNQ (63 aa). 3 disordered regions span residues 540–568, 627–664, and 731–767; these read IDSS…PDFA, DEKV…TGKI, and SSSL…KRMN. Positions 551–560 are enriched in low complexity; sequence AAAASQPKQS. The segment at residues 569–631 is a DNA-binding region (homeobox 3); that stretch reads PQKFKEKTAE…TKALKDEKVE (63 aa). Residue lysine 629 forms a Glycyl lysine isopeptide (Lys-Gly) (interchain with G-Cter in SUMO2) linkage. Residue serine 648 is modified to Phosphoserine. The segment at residues 660 to 722 is a DNA-binding region (homeobox 4); that stretch reads GTGKICKKTP…YAWKNGNLKW (63 aa). A required for nuclear localization region spans residues 734 to 768; it reads LNGLSSLRKRGRGRPKGRGRGRPRGRPRGGKRMNT. Residues 740–764 are compositionally biased toward basic residues; that stretch reads LRKRGRGRPKGRGRGRPRGRPRGGK. Position 774 is a phosphoserine (serine 774). The homeobox 5 DNA-binding region spans 777 to 832; the sequence is KFKTGTAILKDYYLKHKFLNEQDLDELVNRSHMGYEQVREWFAERQRRSELGIELF. A disordered region spans residues 829–873; the sequence is IELFEENEEEDEVIDDQEEDEEETDDSDTWEPPRHVKRKLSKSDD. Acidic residues predominate over residues 831–857; it reads LFEENEEEDEVIDDQEEDEEETDDSDT. The interval 831–873 is required for repressor activity; the sequence is LFEENEEEDEVIDDQEEDEEETDDSDTWEPPRHVKRKLSKSDD. A compositionally biased stretch (basic residues) spans 863-873; it reads HVKRKLSKSDD.

This sequence belongs to the ZHX family. In terms of assembly, forms homodimers. Heterodimer (via HD1 domain) with ZHX2 (via HD1 domain). Also forms a heterodimer with ZHX3 which is a prerequisite for repressor activity. Interacts with ATF7IP and NFYA. Interacts (via homeobox domains) with DNMT3B (via PWWP domain). As to expression, ubiquitously expressed.

Its subcellular location is the nucleus. In terms of biological role, acts as a transcriptional repressor. Increases DNMT3B-mediated repressive transcriptional activity when DNMT3B is tethered to DNA. May link molecule between DNMT3B and other co-repressor proteins. The polypeptide is Zinc fingers and homeoboxes protein 1 (Zhx1) (Rattus norvegicus (Rat)).